The primary structure comprises 133 residues: Fatty acid-binding protein, heart (133 aa).

The residue at position 2 (Ala-2) is an N-acetylalanine. Thr-8 carries the phosphothreonine modification. The residue at position 20 (Tyr-20) is a Phosphotyrosine; by Tyr-kinases. Phosphoserine is present on Ser-23. The residue at position 30 (Thr-30) is a Phosphothreonine. Position 83 is a phosphoserine (Ser-83). Position 127-129 (127-129) interacts with (9Z)-octadecenoate; the sequence is RTY. Hexadecanoate is bound at residue 127-129; that stretch reads RTY. Octadecanoate is bound at residue 127-129; the sequence is RTY.

Belongs to the calycin superfamily. Fatty-acid binding protein (FABP) family.

It is found in the cytoplasm. In terms of biological role, FABPs are thought to play a role in the intracellular transport of long-chain fatty acids and their acyl-CoA esters. FABPs are important elements related to the hibernating state in mammals. The chain is Fatty acid-binding protein, heart (FABP3) from Myotis lucifugus (Little brown bat).